A 1262-amino-acid polypeptide reads, in one-letter code: Collagen alpha-1(III) chain (1262 aa).

A signal peptide spans 1 to 23; that stretch reads MMSFVQKVSLFILAVFQPSVILA. The propeptide at 24 to 150 is N-terminal propeptide; it reads QQDALGGCTH…PSISGGSFSP (127 aa). The region spanning 29–88 is the VWFC domain; it reads GGCTHLGQEYADRDVWKPEPCQICVCDSGSVLCDDIICDDQELDCPNPEIPLGECCPVCP. Disordered regions lie at residues 95 to 143 and 160 to 1000; these read TELP…CPSI and GSVG…GGVA. Over residues 102–118 the composition is skewed to low complexity; sequence GPKGDPGSPGSPGRTGA. A compositionally biased stretch (pro residues) spans 119 to 134; that stretch reads PGPPGQPGSPGAPGPP. The tract at residues 145–164 is nonhelical region (N-terminal); the sequence is GGSFSPQYDSYDVKAGSVGM. The interval 165–994 is triple-helical region; it reads GYPPQPISGF…PGPSGPPGPC (830 aa). Residues 167 to 190 are compositionally biased toward pro residues; it reads PPQPISGFPGPPGPSGPPGPPGHA. Residues 192–201 are compositionally biased toward low complexity; it reads PPGSNGYQGP. The span at 202–216 shows a compositional bias: pro residues; the sequence is PGEPGQPGPSGPPGP. Positions 228 to 240 are enriched in basic and acidic residues; sequence KDGEPGRPGRNGD. The segment covering 253 to 264 has biased composition (low complexity); sequence PGMPGMPGMKGA. K262 is modified (5-hydroxylysine). The segment covering 265–274 has biased composition (basic and acidic residues); the sequence is RGFDGKDGAK. Low complexity-rich tracts occupy residues 276–295 and 339–376; these read DSGA…NGSP and TAGF…QGQA. K283 is subject to 5-hydroxylysine. Residues 389–414 are compositionally biased toward gly residues; that stretch reads GSPGGKGEMGPSGIPGGPGPPGGRGL. Low complexity-rich tracts occupy residues 534-549 and 631-640; these read MRGL…SDGK and PGPSGSPGLQ. The segment covering 641–650 has biased composition (gly residues); the sequence is GLPGGPGPAG. The span at 672–684 shows a compositional bias: low complexity; it reads PKGENGIPGERGP. The span at 692 to 701 shows a compositional bias: gly residues; that stretch reads GARGGPGPAG. 4 stretches are compositionally biased toward low complexity: residues 723–738, 781–790, 802–817, and 828–838; these read LQGM…SPGP, TGPAGAPGPA, QGLP…PGQN, and PPGLRGEAGPP. Position 859 is a 5-hydroxylysine (K859). Gly residues predominate over residues 863–872; sequence GSPGGPGAAG. Residues 895 to 904 are compositionally biased toward pro residues; sequence PGVPGPPGHP. Positions 927–940 are enriched in low complexity; the sequence is PQGAIGSPGASGAR. Positions 976–993 are enriched in pro residues; that stretch reads AGPPGQPGLPGPSGPPGP. The tract at residues 995-1003 is nonhelical region (C-terminal); the sequence is CGGGVASLG. The propeptide at 1018–1262 is C-terminal propeptide; it reads DEPKENEINL…GVDVGPVCFL (245 aa). Residues 1028 to 1262 form the Fibrillar collagen NC1 domain; sequence GEIMSSMKSI…GVDVGPVCFL (235 aa). 3 disulfide bridges follow: C1058-C1090, C1098-C1260, and C1168-C1213. Ca(2+)-binding residues include D1076, N1078, Q1079, C1081, and D1084. The N-linked (GlcNAc...) asparagine glycan is linked to N1163.

This sequence belongs to the fibrillar collagen family. As to quaternary structure, trimers of identical alpha 1(III) chains. The chains are linked to each other by interchain disulfide bonds. Trimers are also cross-linked via hydroxylysines. Post-translationally, prolines at the third position of the tripeptide repeating unit (G-X-Y) are hydroxylated in some or all of the chains.

Its subcellular location is the secreted. It is found in the extracellular space. It localises to the extracellular matrix. Collagen type III occurs in most soft connective tissues along with type I collagen. The polypeptide is Collagen alpha-1(III) chain (COL3A1) (Gallus gallus (Chicken)).